Consider the following 2325-residue polypeptide: Otogelin-like protein (2325 aa).

Positions 1–22 (MVPWRALSLPILLVSLRGYVCA) are cleaved as a signal peptide. Residues 112 to 288 (GICKTWGQYH…VLTPDDTKCV (177 aa)) form the VWFD 1 domain. Cystine bridges form between Cys-114–Cys-248 and Cys-136–Cys-287. Asn-425 is a glycosylation site (N-linked (GlcNAc...) asparagine). In terms of domain architecture, VWFD 2 spans 472-645 (VQCSVVGDSH…HAWRVSSTCF (174 aa)). Disulfide bonds link Cys-474–Cys-609, Cys-496–Cys-644, and Cys-518–Cys-526. The region spanning 736 to 791 (CQKGMLYHHCSSLCLRSCTSLSSPEQCKDDCAEGCNCPEGKFYEETLNFCVPIYHC) is the TIL 1 domain. Residues Asn-817 and Asn-867 are each glycosylated (N-linked (GlcNAc...) asparagine). One can recognise a VWFD 3 domain in the interval 937-1114 (AVCTVYGDRH…DLMEALKPCE (178 aa)). Intrachain disulfides connect Cys-939/Cys-1069, Cys-961/Cys-1113, and Cys-983/Cys-990. An N-linked (GlcNAc...) asparagine glycan is attached at Asn-1280. Residues 1366–1418 (RYEPCATPCFKTCSDPEALACTFLPPVEGCLPYCPKNMILDETTLKCVHPEDC) form the TIL 2 domain. The 190-residue stretch at 1506–1695 (CRCSMLSELS…SWEIEKSFEV (190 aa)) folds into the VWFD 4 domain. 2 cysteine pairs are disulfide-bonded: Cys-1508–Cys-1655 and Cys-1549–Cys-1571. Asn-1576 and Asn-2170 each carry an N-linked (GlcNAc...) asparagine glycan. Disulfide bonds link Cys-2233/Cys-2289, Cys-2254/Cys-2303, Cys-2265/Cys-2320, and Cys-2269/Cys-2322. The CTCK domain maps to 2233–2325 (CKREERICQK…EPIDCTCQWN (93 aa)). N-linked (GlcNAc...) asparagine glycosylation is present at Asn-2296.

The protein belongs to the otogelin family.

It is found in the secreted. This Mus musculus (Mouse) protein is Otogelin-like protein (Otogl).